A 97-amino-acid chain; its full sequence is Large ribosomal subunit protein eL21 (97 aa).

Positions 1–24 (MVQKAHSFRRKTRKKLRKHPRRRG) are enriched in basic residues. The interval 1–25 (MVQKAHSFRRKTRKKLRKHPRRRGL) is disordered.

The protein belongs to the eukaryotic ribosomal protein eL21 family.

In Pyrococcus abyssi (strain GE5 / Orsay), this protein is Large ribosomal subunit protein eL21 (rpl21e).